A 518-amino-acid polypeptide reads, in one-letter code: Protein translocase subunit SecD (518 aa).

6 helical membrane passes run 9–29 (IFLS…NFMQ), 361–381 (LIGF…LGLF), 384–404 (IALS…QATL), 406–426 (LPGI…NVLI), 452–474 (FATI…IFGV), and 486–506 (IGII…IDIW).

The protein belongs to the SecD/SecF family. SecD subfamily. As to quaternary structure, forms a complex with SecF. Part of the essential Sec protein translocation apparatus which comprises SecA, SecYEG and auxiliary proteins SecDF-YajC and YidC.

The protein localises to the cell inner membrane. Functionally, part of the Sec protein translocase complex. Interacts with the SecYEG preprotein conducting channel. SecDF uses the proton motive force (PMF) to complete protein translocation after the ATP-dependent function of SecA. This is Protein translocase subunit SecD from Rickettsia conorii (strain ATCC VR-613 / Malish 7).